The chain runs to 189 residues: Peptidyl-tRNA hydrolase (189 aa).

Residue Tyr15 participates in tRNA binding. Residue His20 is the Proton acceptor of the active site. Phe66, Asn68, and Asn114 together coordinate tRNA.

It belongs to the PTH family. In terms of assembly, monomer.

It is found in the cytoplasm. It catalyses the reaction an N-acyl-L-alpha-aminoacyl-tRNA + H2O = an N-acyl-L-amino acid + a tRNA + H(+). Its function is as follows. Hydrolyzes ribosome-free peptidyl-tRNAs (with 1 or more amino acids incorporated), which drop off the ribosome during protein synthesis, or as a result of ribosome stalling. Functionally, catalyzes the release of premature peptidyl moieties from peptidyl-tRNA molecules trapped in stalled 50S ribosomal subunits, and thus maintains levels of free tRNAs and 50S ribosomes. This Streptococcus equi subsp. zooepidemicus (strain H70) protein is Peptidyl-tRNA hydrolase.